The primary structure comprises 1663 residues: Kotanin synthase (1663 aa).

Residues 19-168 are N-terminal acylcarrier protein transacylase domain (SAT); it reads RPHEFSFNTQ…PLPVYGGPCH (150 aa). Residues 301 to 731 enclose the Ketosynthase family 3 (KS3) domain; the sequence is DSRIAVVGMS…GGNTSLLLEE (431 aa). Active-site for beta-ketoacyl synthase activity residues include cysteine 474, histidine 609, and histidine 650. Residues 830–1149 form a malonyl-CoA:ACP transacylase (MAT) domain region; the sequence is FIFSGQGSFY…SMCTLQETGV (320 aa). The segment at 1209–1527 is product template (PT) domain; it reads TALVHQIMEE…PRILMNRFFD (319 aa). An N-terminal hotdog fold region spans residues 1213–1349; it reads HQIMEESFRP…GVVRCGDRQS (137 aa). Residues 1213-1523 form the PKS/mFAS DH domain; it reads HQIMEESFRP…LRPLPRILMN (311 aa). Catalysis depends on histidine 1245, which acts as the Proton acceptor; for dehydratase activity. The segment at 1376–1523 is C-terminal hotdog fold; that stretch reads QASRVSRDLV…LRPLPRILMN (148 aa). The Proton donor; for dehydratase activity role is filled by aspartate 1434. The tract at residues 1544-1580 is disordered; that stretch reads DLPQVQHQPSPTTDSGPDDDPKDPNTGPLTPEVDLPV. In terms of domain architecture, Carrier spans 1586–1663; the sequence is KANTKLVRGA…ELKEYLTASW (78 aa). O-(pantetheine 4'-phosphoryl)serine is present on serine 1623.

Pantetheine 4'-phosphate serves as cofactor.

It functions in the pathway secondary metabolite biosynthesis. Functionally, non-reducing polyketide synthase; part of the gene cluster that mediates the biosynthesis of the bicoumarin kotanin. The non-reducing polyketide synthase ktnS first catalyzes the formation of the pentaketidic 4,7-dihydroxy-5-methylcoumarin from acetyl coenzyme A and 4 malonyl coenzyme A molecules. Further O-methylation by ktnB leads to the formation of 7-demethylsiderin. Then, an oxidative phenol coupling catalyzed by the cytochrome P450 monooxygenase ktnC forms the 8,8'-dimer P-orlandin via dimerization the monomeric precursor, 7-demethylsiderin. P-orlandin is subsequently O-methylated in a stepwise fashion to demethylkotanin and kotanin. The sequence is that of Kotanin synthase from Aspergillus niger (strain ATCC MYA-4892 / CBS 513.88 / FGSC A1513).